A 607-amino-acid chain; its full sequence is TOM1-like protein 8 (607 aa).

One can recognise a VHS domain in the interval 9–138 (ATSDMLIGPD…ELLRAGIVFP (130 aa)). The segment at 141 to 175 (PQITPSSGQNGPSTRYPQNSRNARQEAIDTSTESE) is disordered. The GAT domain occupies 175–263 (EFPTLSLTEI…LLAKHEAIAS (89 aa)). Position 297 is a phosphoserine (Ser297). The span at 355–379 (NNCESSTPTSNPHANHQKVQQNYSN) shows a compositional bias: polar residues. 3 disordered regions span residues 355 to 393 (NNCE…YYGQ), 407 to 460 (QPSS…SPTH), and 555 to 582 (DNGN…NKKP). Ser410 bears the Phosphoserine mark. Low complexity predominate over residues 448-460 (QSPSSSPQYSPTH). Positions 555-569 (DNGNNNTNPYQVSSH) are enriched in polar residues.

This sequence belongs to the TOM1 family. As to expression, specifically expressed in siliques and flowers.

It localises to the membrane. Might contribute to the loading of the ESCRT machinery. The polypeptide is TOM1-like protein 8 (Arabidopsis thaliana (Mouse-ear cress)).